Reading from the N-terminus, the 52-residue chain is Large ribosomal subunit protein bL32c (52 aa).

This sequence belongs to the bacterial ribosomal protein bL32 family.

It localises to the plastid. The protein resides in the chloroplast. This Aethionema grandiflorum (Persian stone-cress) protein is Large ribosomal subunit protein bL32c.